The following is a 190-amino-acid chain: Orotate phosphoribosyltransferase (190 aa).

114-122 (EDVVTTGGS) lines the 5-phospho-alpha-D-ribose 1-diphosphate pocket. Orotate is bound by residues threonine 118 and arginine 146.

This sequence belongs to the purine/pyrimidine phosphoribosyltransferase family. PyrE subfamily. In terms of assembly, homodimer. Mg(2+) serves as cofactor.

It carries out the reaction orotidine 5'-phosphate + diphosphate = orotate + 5-phospho-alpha-D-ribose 1-diphosphate. It functions in the pathway pyrimidine metabolism; UMP biosynthesis via de novo pathway; UMP from orotate: step 1/2. Functionally, catalyzes the transfer of a ribosyl phosphate group from 5-phosphoribose 1-diphosphate to orotate, leading to the formation of orotidine monophosphate (OMP). In Caldanaerobacter subterraneus subsp. tengcongensis (strain DSM 15242 / JCM 11007 / NBRC 100824 / MB4) (Thermoanaerobacter tengcongensis), this protein is Orotate phosphoribosyltransferase.